The following is a 116-amino-acid chain: Classical arabinogalactan protein 25 (116 aa).

Positions 1–28 (MAFSFLNKLLIIFIFIFISLSSSSPTIS) are cleaved as a signal peptide. The disordered stretch occupies residues 40-95 (LLPSPGDALPSDDGSGTIPSSPSPPDPDTNDGSYPDPLAFSPFASPPVSSPSPPPS). Composition is skewed to low complexity over residues 50–59 (SDDGSGTIPS) and 69–82 (NDGS…FSPF). Over residues 83-95 (ASPPVSSPSPPPS) the composition is skewed to pro residues. The GPI-anchor amidated serine moiety is linked to residue serine 89. The propeptide at 90-116 (PSPPPSLPSAGVLLISLIISSASFLAL) is removed in mature form.

Belongs to the classical AGP family. O-glycosylated on the hydroxyproline residues.

It localises to the cell membrane. Proteoglycan that seems to be implicated in diverse developmental roles such as differentiation, cell-cell recognition, embryogenesis and programmed cell death. This chain is Classical arabinogalactan protein 25 (AGP25), found in Arabidopsis thaliana (Mouse-ear cress).